A 615-amino-acid polypeptide reads, in one-letter code: ATP-dependent RNA helicase mrh4, mitochondrial (615 aa).

The N-terminal 37 residues, 1-37 (MLRPKAGKCLLCSFRAAQKPVSQKWPSRALSMRTRLP), are a transit peptide targeting the mitochondrion. Residues 21–108 (VSQKWPSRAL…HRDRDDKKDR (88 aa)) form a disordered region. Residues 90-108 (QERRTSRLDHRDRDDKKDR) are compositionally biased toward basic and acidic residues. The short motif at 138 to 171 (QSFEQFALLDSVKQAIFQQALPELKEHVPTPVQR) is the Q motif element. Residues 184-395 (RRPKSEMEQY…RKRFPDINRL (212 aa)) form the Helicase ATP-binding domain. 197–204 (AETGSGKT) lines the ATP pocket. A DEAD box motif is present at residues 342–345 (DEAD). Residues 444-615 (PVKGLMDVKR…EGMFEGKALI (172 aa)) enclose the Helicase C-terminal domain.

This sequence belongs to the DEAD box helicase family. MRH4 subfamily.

The protein localises to the mitochondrion. The catalysed reaction is ATP + H2O = ADP + phosphate + H(+). Its function is as follows. ATP-binding RNA helicase involved in mitochondrial RNA metabolism. Required for maintenance of mitochondrial DNA. This is ATP-dependent RNA helicase mrh4, mitochondrial (mrh4) from Sclerotinia sclerotiorum (strain ATCC 18683 / 1980 / Ss-1) (White mold).